Reading from the N-terminus, the 254-residue chain is 3-dehydroquinate dehydratase (254 aa).

3-dehydroquinate is bound by residues 47–49 (EFR) and R83. H144 (proton donor/acceptor) is an active-site residue. K171 acts as the Schiff-base intermediate with substrate in catalysis. Residues R213, S232, and Q236 each contribute to the 3-dehydroquinate site.

Belongs to the type-I 3-dehydroquinase family. In terms of assembly, homodimer.

It catalyses the reaction 3-dehydroquinate = 3-dehydroshikimate + H2O. Its pathway is metabolic intermediate biosynthesis; chorismate biosynthesis; chorismate from D-erythrose 4-phosphate and phosphoenolpyruvate: step 3/7. Functionally, involved in the third step of the chorismate pathway, which leads to the biosynthesis of aromatic amino acids. Catalyzes the cis-dehydration of 3-dehydroquinate (DHQ) and introduces the first double bond of the aromatic ring to yield 3-dehydroshikimate. The sequence is that of 3-dehydroquinate dehydratase from Neisseria meningitidis serogroup B (strain ATCC BAA-335 / MC58).